The primary structure comprises 209 residues: Thiamine-phosphate synthase (209 aa).

4-amino-2-methyl-5-(diphosphooxymethyl)pyrimidine contacts are provided by residues 38–42 (QYRAK) and Asn-70. Residues Asp-71 and Asp-90 each coordinate Mg(2+). Ser-109 contacts 4-amino-2-methyl-5-(diphosphooxymethyl)pyrimidine. 135–137 (TST) is a 2-[(2R,5Z)-2-carboxy-4-methylthiazol-5(2H)-ylidene]ethyl phosphate binding site. Lys-138 serves as a coordination point for 4-amino-2-methyl-5-(diphosphooxymethyl)pyrimidine. 2-[(2R,5Z)-2-carboxy-4-methylthiazol-5(2H)-ylidene]ethyl phosphate is bound by residues Gly-165 and 185–186 (VS).

Belongs to the thiamine-phosphate synthase family. Mg(2+) is required as a cofactor.

It carries out the reaction 2-[(2R,5Z)-2-carboxy-4-methylthiazol-5(2H)-ylidene]ethyl phosphate + 4-amino-2-methyl-5-(diphosphooxymethyl)pyrimidine + 2 H(+) = thiamine phosphate + CO2 + diphosphate. It catalyses the reaction 2-(2-carboxy-4-methylthiazol-5-yl)ethyl phosphate + 4-amino-2-methyl-5-(diphosphooxymethyl)pyrimidine + 2 H(+) = thiamine phosphate + CO2 + diphosphate. The catalysed reaction is 4-methyl-5-(2-phosphooxyethyl)-thiazole + 4-amino-2-methyl-5-(diphosphooxymethyl)pyrimidine + H(+) = thiamine phosphate + diphosphate. Its pathway is cofactor biosynthesis; thiamine diphosphate biosynthesis; thiamine phosphate from 4-amino-2-methyl-5-diphosphomethylpyrimidine and 4-methyl-5-(2-phosphoethyl)-thiazole: step 1/1. In terms of biological role, condenses 4-methyl-5-(beta-hydroxyethyl)thiazole monophosphate (THZ-P) and 2-methyl-4-amino-5-hydroxymethyl pyrimidine pyrophosphate (HMP-PP) to form thiamine monophosphate (TMP). The chain is Thiamine-phosphate synthase from Persephonella marina (strain DSM 14350 / EX-H1).